We begin with the raw amino-acid sequence, 603 residues long: NADH-ubiquinone oxidoreductase chain 5 (603 aa).

The next 16 membrane-spanning stretches (helical) occupy residues 4-24 (YTTM…TTLI), 38-58 (SIIA…MCLD), 87-107 (MTFI…SLWY), 122-142 (LIFL…QLFI), 144-160 (WEGV…WWYA), 171-191 (AILY…WFLL), 211-233 (TPLL…HPWL), 241-261 (TPVS…FLLI), 272-292 (LIQT…AICA), 301-320 (IVAF…IGIN), 325-347 (AFLH…GSII), 370-390 (STSL…TGFY), 407-429 (WALS…MILL), 457-477 (LTIG…PMST), 482-502 (IPLY…LTAL), and 583-603 (MIKL…LLIM).

This sequence belongs to the complex I subunit 5 family. As to quaternary structure, core subunit of respiratory chain NADH dehydrogenase (Complex I) which is composed of 45 different subunits.

It localises to the mitochondrion inner membrane. It carries out the reaction a ubiquinone + NADH + 5 H(+)(in) = a ubiquinol + NAD(+) + 4 H(+)(out). Its function is as follows. Core subunit of the mitochondrial membrane respiratory chain NADH dehydrogenase (Complex I) which catalyzes electron transfer from NADH through the respiratory chain, using ubiquinone as an electron acceptor. Essential for the catalytic activity and assembly of complex I. The polypeptide is NADH-ubiquinone oxidoreductase chain 5 (MT-ND5) (Pan paniscus (Pygmy chimpanzee)).